The primary structure comprises 135 residues: MADNFNFELVSPERLLLSEMVTEVVIPATEGEMTVMAHHAPTMTTIKPGIVSVRSGSGKKQDYVVFGGFADILPTGCTLLAESAVPVEELNKDELTRRIEAAKKELEDAVHHEHKSKLEHFILELTHLRGVVQQD.

This sequence belongs to the ATPase epsilon chain family. In terms of assembly, F-type ATPases have 2 components, CF(1) - the catalytic core - and CF(0) - the membrane proton channel. CF(1) has five subunits: alpha(3), beta(3), gamma(1), delta(1), epsilon(1). CF(0) has three main subunits: a, b and c.

It localises to the cell inner membrane. In terms of biological role, produces ATP from ADP in the presence of a proton gradient across the membrane. In Rhizobium etli (strain CIAT 652), this protein is ATP synthase epsilon chain.